The sequence spans 529 residues: Acid-sensing ion channel 1C (529 aa).

At 1–51 (MTAMKGDSEDSIESMRPSNLQVFANNSTLHGMSHIFAYGHMTFRRFLWTLS) the chain is on the cytoplasmic side. The chain crosses the membrane as a helical span at residues 52 to 68 (FMGSLGLLMYVCMDRVY). At 69 to 427 (YYFEFPHVTK…EKIEQKKAYE (359 aa)) the chain is on the extracellular side. 3 N-linked (GlcNAc...) asparagine glycosylation sites follow: asparagine 86, asparagine 155, and asparagine 161. Cystine bridges form between cysteine 95–cysteine 196, cysteine 174–cysteine 181, cysteine 292–cysteine 367, cysteine 310–cysteine 363, cysteine 314–cysteine 361, cysteine 323–cysteine 345, and cysteine 325–cysteine 337. Asparagine 185 is a glycosylation site (N-linked (GlcNAc...) asparagine). Asparagine 368 and asparagine 395 each carry an N-linked (GlcNAc...) asparagine glycan. A discontinuously helical membrane pass occupies residues 428-458 (VAGLLGDIGGQMGLFIGASVLTILEIFDYLY). Positions 444–446 (GAS) match the GAS motif; ion selectivity filter motif. Topologically, residues 459–529 (EVLKDKILGS…PFVVGSNSGK (71 aa)) are cytoplasmic.

It belongs to the amiloride-sensitive sodium channel (TC 1.A.6) family. ASIC1 subfamily. As to quaternary structure, homotrimer. Heterotrimer; with other ASIC proteins producing channel with different properties. Interacts with asic1a. As to expression, expressed in central nervous system.

Its subcellular location is the cell membrane. The protein resides in the postsynaptic cell membrane. It is found in the cell projection. The protein localises to the dendrite. The catalysed reaction is Na(+)(in) = Na(+)(out). It catalyses the reaction K(+)(in) = K(+)(out). The enzyme catalyses Li(+)(in) = Li(+)(out). It carries out the reaction Ca(2+)(in) = Ca(2+)(out). With respect to regulation, inhibited by the diuretic drug amiloride. Forms voltage-independent, pH-gated trimeric sodium channels that act as postsynaptic excitatory receptors in the nervous system, playing a crucial role in regulating synaptic plasticity, learning, and memory. Upon extracellular pH drop this channel elicits transient, fast activating, and completely desensitizing inward currents. Displays high selectivity for sodium ions but can also permit the permeation of other cations. The protein is Acid-sensing ion channel 1C of Danio rerio (Zebrafish).